A 183-amino-acid polypeptide reads, in one-letter code: NRR repressor homolog 1 (183 aa).

Disordered stretches follow at residues 1 to 40 and 66 to 183; these read MEGV…VVGG and NGEE…PTDQ. Positions 31-40 are enriched in acidic residues; the sequence is EEEEGAVVGG. The segment covering 70–79 has biased composition (gly residues); that stretch reads GAAGGDGDGA. Residues 101-115 show a composition bias toward acidic residues; it reads FEFEEAAAGAGDDDA. Positions 135–145 are enriched in basic and acidic residues; sequence AVEKRRTEKEA. Residues 150–161 show a composition bias toward acidic residues; it reads AEDDDDEQEGGE. Basic and acidic residues predominate over residues 163–183; that stretch reads VEGKEEHRPGRRVEAHGPTDQ.

This sequence belongs to the NPR1-interactor family. Interacts with NPR1/NH1. Interacts with NPR3/NH3.

The protein localises to the nucleus. Its function is as follows. Binds to and represses NPR1/NH1-mediated transcriptional activation of LG2 in vitro. This chain is NRR repressor homolog 1, found in Oryza sativa subsp. japonica (Rice).